Reading from the N-terminus, the 200-residue chain is MKSLHIICLLFIFVARGNSRSCDFCHNIGADCEGFQHECSSPEDECGKVFLEISSASLSVRTVHKNCFSSSVCKLRHFDVNIGHDSYIRGRINCCEKEPCEDQSFPGLPLSQPNGYYCPGSLGLFTKDSTEFEAICKGTETKCINIVGHRYEHYPGDIAYNLKGCISSCPLLSLSNATHEENRNYLEKVECKDALQFEKQ.

Positions 1–19 are cleaved as a signal peptide; it reads MKSLHIICLLFIFVARGNS. 8 disulfides stabilise this stretch: Cys-22-Cys-46, Cys-25-Cys-32, Cys-39-Cys-67, Cys-73-Cys-94, Cys-95-Cys-100, Cys-118-Cys-143, Cys-136-Cys-165, and Cys-169-Cys-191. N-linked (GlcNAc...) asparagine glycosylation is present at Asn-176.

It belongs to the CNF-like-inhibitor family. In terms of assembly, occurs as a mixture of oligomers. Tetrameric arrangement appears to be the predominant quaternary structure. Post-translationally, N-glycosylated. Expressed by the liver.

The protein resides in the secreted. Inhibits basic phospholipase A2 isozymes PLA-B, BP-I and BP-II. This Protobothrops flavoviridis (Habu) protein is Phospholipase A2 inhibitor 1.